The chain runs to 908 residues: Serine/threonine-protein kinase WARTS homolog (908 aa).

Residues 42–70 are a coiled coil; sequence EIRVGRHRAKLDEIRESLKAYEHEAGLLS. Low complexity-rich tracts occupy residues 115 to 125 and 168 to 181; these read VSSAAVSNSNS and PSTT…TTTE. Disordered stretches follow at residues 115–134, 162–183, 203–225, and 388–412; these read VSSA…GGHK, MIRN…TEES, NNNA…DSSP, and KSRA…VSSP. A compositionally biased stretch (pro residues) spans 392–404; it reads QPPPPQYNQPSEP. The stretch at 439–470 forms a coiled coil; it reads YMEQHVERLLQQYKEREKRMKQLEKEMVSAQL. One can recognise a Protein kinase domain in the interval 502–807; the sequence is FTVISHIGVG…TAQVKNHPWF (306 aa). Residues 508–516 and lysine 531 contribute to the ATP site; that span reads IGVGAFGKV. Aspartate 625 functions as the Proton acceptor in the catalytic mechanism. The AGC-kinase C-terminal domain maps to 808 to 874; that stretch reads RGIDWVNLRK…RHFFDTDSVG (67 aa).

This sequence belongs to the protein kinase superfamily. AGC Ser/Thr protein kinase family. In terms of assembly, interacts (via N-terminus) with yap-1 (via WW domain). Requires Mg(2+) as cofactor. In terms of tissue distribution, expressed in muscles and epithelial tissues including pharynx, intestine and hypodermis. Expressed in vulval and spermathecal seam cells.

It is found in the cytoplasm. The protein localises to the apical cell membrane. The catalysed reaction is L-seryl-[protein] + ATP = O-phospho-L-seryl-[protein] + ADP + H(+). It catalyses the reaction L-threonyl-[protein] + ATP = O-phospho-L-threonyl-[protein] + ADP + H(+). In terms of biological role, phosphorylates yap-1 which may negatively regulate yap-1 nuclear localization. Plays an essential role in larval development. Regulates growth, the formation of gut granules, lifespan and cell and body sizes probably in synergy with the TGF-beta sma/mab pathway. Does not appear to regulate apoptosis and proliferation. In addition, may synergize with the TGF-beta daf-7 dauer pathway to regulate entry into the dauer stage. Maintains the cellular integrity of intestinal cells by regulating the localization of apical actin and junctional proteins. The polypeptide is Serine/threonine-protein kinase WARTS homolog (Caenorhabditis elegans).